We begin with the raw amino-acid sequence, 225 residues long: C-type lectin domain-containing protein 91 (225 aa).

The first 21 residues, 1-21 (MRSTYILIIVPLIIIGGGVVA), serve as a signal peptide directing secretion. The 131-residue stretch at 85–215 (YSDSCYFIET…CTMAFKSICE (131 aa)) folds into the C-type lectin domain. 2 cysteine pairs are disulfide-bonded: cysteine 106-cysteine 214 and cysteine 185-cysteine 206. Asparagine 217 carries an N-linked (GlcNAc...) asparagine glycan.

The protein resides in the secreted. The sequence is that of C-type lectin domain-containing protein 91 (clec-91) from Caenorhabditis elegans.